The following is an 813-amino-acid chain: Leucine--tRNA ligase (813 aa).

The short motif at 40–51 is the 'HIGH' region element; that stretch reads SYPSGSKLHAGH. The 'KMSKS' region motif lies at 572–576; the sequence is KMSKS. Lysine 575 contributes to the ATP binding site.

The protein belongs to the class-I aminoacyl-tRNA synthetase family.

It localises to the cytoplasm. The enzyme catalyses tRNA(Leu) + L-leucine + ATP = L-leucyl-tRNA(Leu) + AMP + diphosphate. The protein is Leucine--tRNA ligase of Clostridium botulinum (strain ATCC 19397 / Type A).